A 197-amino-acid polypeptide reads, in one-letter code: Probable deoxycytidylate deaminase (197 aa).

Positions 49-183 constitute a CMP/dCMP-type deaminase domain; the sequence is KKHQRFLRIA…KMLDHARLPY (135 aa). Histidine 117 contacts Zn(2+). The active-site Proton donor is glutamate 119. 2 residues coordinate Zn(2+): cysteine 143 and cysteine 146.

Belongs to the cytidine and deoxycytidylate deaminase family. It depends on Zn(2+) as a cofactor.

It catalyses the reaction dCMP + H2O + H(+) = dUMP + NH4(+). Supplies the nucleotide substrate for thymidylate synthetase. The protein is Probable deoxycytidylate deaminase of Caenorhabditis elegans.